The chain runs to 1338 residues: Aldehyde oxidase 1 (1338 aa).

A 2Fe-2S ferredoxin-type domain is found at 5–92 (SELLFYVNGR…GTAVTTVEGI (88 aa)). Mo-molybdopterin-binding residues include Gln-113 and Cys-151. The region spanning 236–421 (FGSERMMWFS…VSVNIPYSRK (186 aa)) is the FAD-binding PCMH-type domain. Residues 264–271 (VIMGNTSV), Ala-345, Ser-354, His-358, Asp-367, and Leu-411 contribute to the FAD site. Residues 806-807 (AF) and Met-1047 each bind Mo-molybdopterin. Position 1068 is a phosphoserine (Ser-1068). Residues 1088–1091 (GSVV), Gln-1203, and Leu-1268 contribute to the Mo-molybdopterin site. Glu-1270 serves as the catalytic Proton acceptor; for azaheterocycle hydroxylase activity.

The protein belongs to the xanthine dehydrogenase family. As to quaternary structure, homodimer. The cofactor is [2Fe-2S] cluster. FAD serves as cofactor. It depends on Mo-molybdopterin as a cofactor. As to expression, detected at high levels in liver, also detected in lung, kidney, lacrimal gland and olfactory mucosa.

It localises to the cytoplasm. It catalyses the reaction an aldehyde + O2 + H2O = a carboxylate + H2O2 + H(+). It carries out the reaction retinal + O2 + H2O = retinoate + H2O2 + H(+). Its function is as follows. Oxidase with broad substrate specificity, oxidizing aromatic azaheterocycles, such as N1-methylnicotinamide, N-methylphthalazinium and phthalazine, as well as aldehydes, such as benzaldehyde, retinal, pyridoxal, and vanillin. Plays a key role in the metabolism of xenobiotics and drugs containing aromatic azaheterocyclic substituents. Participates in the bioactivation of prodrugs such as famciclovir, catalyzing the oxidation step from 6-deoxypenciclovir to penciclovir, which is a potent antiviral agent. Is probably involved in the regulation of reactive oxygen species homeostasis. May be a prominent source of superoxide generation via the one-electron reduction of molecular oxygen. May also catalyze nitric oxide (NO) production via the reduction of nitrite to NO with NADH or aldehyde as electron donor. May play a role in adipogenesis. The polypeptide is Aldehyde oxidase 1 (AOX1) (Macaca fascicularis (Crab-eating macaque)).